Here is a 321-residue protein sequence, read N- to C-terminus: Thioredoxin reductase (321 aa).

An FAD-binding site is contributed by 36–43 (TGMEKGGQ). A disulfide bridge connects residues Cys-136 and Cys-139. 287–296 (DVMDHIYRQA) serves as a coordination point for FAD.

It belongs to the class-II pyridine nucleotide-disulfide oxidoreductase family. As to quaternary structure, homodimer. It depends on FAD as a cofactor.

The protein localises to the cytoplasm. The enzyme catalyses [thioredoxin]-dithiol + NADP(+) = [thioredoxin]-disulfide + NADPH + H(+). This Escherichia coli O157:H7 protein is Thioredoxin reductase (trxB).